The primary structure comprises 726 residues: Bromodomain-containing protein 3 (726 aa).

The interval methionine 1 to lysine 35 is disordered. N-acetylserine is present on serine 2. Pro residues predominate over residues threonine 15–valine 26. The Bromo 1 domain occupies arginine 34–methionine 140. The segment at lysine 78 to proline 80 is acetylated histone H3 binding. Disordered stretches follow at residues proline 149–glutamine 169 and valine 237–lysine 305. Residues threonine 248 to serine 261 show a composition bias toward low complexity. Phosphoserine is present on residues serine 263 and serine 281. The region spanning glycine 306 to methionine 415 is the Bromo 2 domain. Lysine 414 participates in a covalent cross-link: Glycyl lysine isopeptide (Lys-Gly) (interchain with G-Cter in SUMO2). Disordered stretches follow at residues glutamate 421–arginine 462, leucine 477–aspartate 575, and leucine 637–glutamate 726. The stretch at serine 453–alanine 524 forms a coiled coil. Over residues lysine 487 to aspartate 503 the composition is skewed to basic residues. The span at lysine 504–alanine 521 shows a compositional bias: basic and acidic residues. Residues valine 523–alanine 540 are compositionally biased toward low complexity. Residues aspartate 562–proline 644 enclose the NET domain. Serine 563 bears the Phosphoserine mark. Residues phenylalanine 645 to lysine 684 adopt a coiled-coil conformation. The span at lysine 655–glutamine 673 shows a compositional bias: basic and acidic residues. Residues glycine 692–glutamate 726 are compositionally biased toward low complexity.

This sequence belongs to the BET family. As to quaternary structure, interacts (via bromo domain 1) with GATA1 acetylated at 'Lys-312' and 'Lys-315'. Interacts (via bromo domain 1) with GATA2 acetylated on lysine residues. Interacts (via NET domain) with CHD4 (via KIKL motif). Interacts (via NET domain) with SMARCA4 (via KIKL motif). Interacts (via NET domain) with NSD3 (via KIKL motif). (Microbial infection) Interacts with the Integrase protein of Moloney murine leukemia virus (MLV). Ubiquitous.

The protein resides in the nucleus. It is found in the chromosome. With respect to regulation, inhibited by JQ1, a thieno-triazolo-1,4-diazepine derivative, which specifically inhibits members of the BET family (BRD2, BRD3 and BRD4). The first bromo domain is inhibited by GSK778 (iBET-BD1), which specifically inhibits the first bromo domain of members of the BET family (BRD2, BRD3 and BRD4). The second bromo domain is inhibited by ABBV-744, which specifically inhibits the second bromo domain of members of the BET family (BRD2, BRD3 and BRD4). The second bromo domain is inhibited by GSK046 (iBET-BD2), which specifically inhibits the second bromo domain of members of the BET family (BRD2, BRD3 and BRD4). Chromatin reader that recognizes and binds acetylated histones, thereby controlling gene expression and remodeling chromatin structures. Recruits transcription factors and coactivators to target gene sites, and activates RNA polymerase II machinery for transcriptional elongation. In vitro, binds acetylated lysine residues on the N-terminus of histone H2A, H2B, H3 and H4. Involved in endoderm differentiation via its association with long non-coding RNA (lncRNA) DIGIT: BRD3 undergoes liquid-liquid phase separation upon binding to lncRNA DIGIT, promoting binding to histone H3 acetylated at 'Lys-18' (H3K18ac) to induce endoderm gene expression. Also binds non-histones acetylated proteins, such as GATA1 and GATA2: regulates transcription by promoting the binding of the transcription factor GATA1 to its targets. The chain is Bromodomain-containing protein 3 from Homo sapiens (Human).